Reading from the N-terminus, the 443-residue chain is Tol-Pal system protein TolB (443 aa).

An N-terminal signal peptide occupies residues 1–31; the sequence is MMIMTTRTFFSWFIVICAFWLTSFSSVPVHA. The interval 422–443 is disordered; it reads ERQLPTPNDASDPAWSPLLNIQ.

The protein belongs to the TolB family. In terms of assembly, the Tol-Pal system is composed of five core proteins: the inner membrane proteins TolA, TolQ and TolR, the periplasmic protein TolB and the outer membrane protein Pal. They form a network linking the inner and outer membranes and the peptidoglycan layer.

Its subcellular location is the periplasm. In terms of biological role, part of the Tol-Pal system, which plays a role in outer membrane invagination during cell division and is important for maintaining outer membrane integrity. This Bartonella henselae (strain ATCC 49882 / DSM 28221 / CCUG 30454 / Houston 1) (Rochalimaea henselae) protein is Tol-Pal system protein TolB.